The primary structure comprises 332 residues: Protein phosphatase PTC7 homolog fig (332 aa).

In terms of domain architecture, PPM-type phosphatase spans Lys70 to Val325. Mn(2+)-binding residues include Asp102, Gly103, and Asp247.

Belongs to the PP2C family. Mg(2+) serves as cofactor. Mn(2+) is required as a cofactor.

It catalyses the reaction O-phospho-L-seryl-[protein] + H2O = L-seryl-[protein] + phosphate. The enzyme catalyses O-phospho-L-threonyl-[protein] + H2O = L-threonyl-[protein] + phosphate. The protein is Protein phosphatase PTC7 homolog fig of Drosophila ananassae (Fruit fly).